The primary structure comprises 123 residues: WAP four-disulfide core domain protein 2 (123 aa).

Residues 1 to 26 (MPACRLGLLVASLLLGLLLGLPPVTG) form the signal peptide. WAP domains follow at residues 28 to 69 (GAEK…VTIC) and 72 to 122 (PNEK…VTPV). 8 disulfide bridges follow: C35/C61, C44/C65, C48/C60, C54/C69, C79/C109, C92/C113, C96/C108, and C102/C118.

In terms of assembly, homotrimer; disulfide-linked. As to expression, detected in the distal parts of the epididymis.

The protein resides in the secreted. Functionally, broad range protease inhibitor. The sequence is that of WAP four-disulfide core domain protein 2 (WFDC2) from Sus scrofa (Pig).